A 658-amino-acid polypeptide reads, in one-letter code: Endoglin (658 aa).

A signal peptide spans 1–25 (MDRGTLPLAVALLLASCSLSPTSLA). The interval 26 to 46 (ETVHCDLQPVGPERGEVTYTT) is OR1, N-terminal part. The required for interaction with GDF2 stretch occupies residues 26–337 (ETVHCDLQPV…SSCGGRLQTS (312 aa)). Over 26-586 (ETVHCDLQPV…PDLSGCTSKG (561 aa)) the chain is Extracellular. Cystine bridges form between C30–C207, C53–C182, C242–C330, C350–C382, C363–C442, C394–C412, and C493–C549. The OR2 stretch occupies residues 47 to 199 (SQVSKGCVAQ…MGRTLEWRPR (153 aa)). N-linked (GlcNAc...) asparagine glycosylation is found at N88, N102, N121, and N134. Positions 200-330 (TPALVRGCHL…SIVSLHASSC (131 aa)) are OR1, C-terminal part. Positions 270-282 (QIWTTGEYSFKIF) are essential for interaction with GDF2. N-linked (GlcNAc...) asparagine glycosylation is present at N307. Positions 363–533 (CADDAMTLVL…PEGDPRFSFL (171 aa)) constitute a ZP domain. A Cell attachment site motif is present at residues 399-401 (RGD). Residues 587–611 (LVLPAVLGITFGAFLIGALLTAALW) traverse the membrane as a helical segment. At 612–658 (YIYSHTRSPSKREPVVAVAAPASSESSSTNHSIGSTQSTPCSTSSMA) the chain is on the cytoplasmic side. Residues 626–639 (VVAVAAPASSESSS) show a composition bias toward low complexity. Residues 626 to 658 (VVAVAAPASSESSSTNHSIGSTQSTPCSTSSMA) are disordered. Residues 640-658 (TNHSIGSTQSTPCSTSSMA) are compositionally biased toward polar residues. Phosphoserine; by TGFBR1 is present on residues S646 and S649.

As to quaternary structure, homodimer; disulfide-linked. Forms a heteromeric complex with the signaling receptors for transforming growth factor-beta: TGFBR1 and/or TGFBR2. It is able to bind TGFB1 and TGFB2 with high affinity, but not TGFB3. Interacts with GDF2, forming a heterotetramer with a 2:2 stoichiometry. Interacts with ACVRL1. Can form a heteromeric complex with GDF2 and ACVRL1. Interacts with BMP10. Interacts with DYNLT4. Interacts with ARRB2. In terms of tissue distribution, detected on umbilical veil endothelial cells. Detected in placenta (at protein level). Detected on endothelial cells.

It localises to the cell membrane. Its function is as follows. Vascular endothelium glycoprotein that plays an important role in the regulation of angiogenesis. Required for normal structure and integrity of adult vasculature. Regulates the migration of vascular endothelial cells. Required for normal extraembryonic angiogenesis and for embryonic heart development. May regulate endothelial cell shape changes in response to blood flow, which drive vascular remodeling and establishment of normal vascular morphology during angiogenesis. May play a critical role in the binding of endothelial cells to integrins and/or other RGD receptors. Acts as a TGF-beta coreceptor and is involved in the TGF-beta/BMP signaling cascade that ultimately leads to the activation of SMAD transcription factors. Required for GDF2/BMP9 signaling through SMAD1 in endothelial cells and modulates TGFB1 signaling through SMAD3. The chain is Endoglin (ENG) from Homo sapiens (Human).